The primary structure comprises 479 residues: Lactaldehyde dehydrogenase (479 aa).

NAD(+) is bound at residue leucine 150. Arginine 161 is a binding site for (S)-lactate. Residues 176-179 (KPSE), glutamine 214, and serine 230 contribute to the NAD(+) site. Glutamate 251 serves as a coordination point for (S)-lactate. Active-site residues include glutamate 251 and cysteine 285. Asparagine 286 serves as a coordination point for (S)-lactate. Arginine 336 lines the NAD(+) pocket. Glutamate 443 and histidine 449 together coordinate (S)-lactate.

This sequence belongs to the aldehyde dehydrogenase family. Homotetramer.

The catalysed reaction is (S)-lactaldehyde + NAD(+) + H2O = (S)-lactate + NADH + 2 H(+). It catalyses the reaction glycolaldehyde + NAD(+) + H2O = glycolate + NADH + 2 H(+). It participates in carbohydrate degradation; L-fucose degradation. The protein operates within carbohydrate degradation; L-rhamnose degradation. With respect to regulation, substrate inhibition is very strong with lactaldehyde, diminishing progressively with glycolaldehyde, glyceraldehyde or methylglyoxal. Inhibited by p-hydroxy mercuribenzoate and by some cations, including Mn(2+), Ca(2+), Cu(2+) and Zn(2+). Inhibited by NADH. In terms of biological role, catalyzes the irreversible oxidation of L-lactaldehyde to L-lactate. Also shows high activity with glycolaldehyde and L-glyceraldehyde. Has weaker activity with various aldehydes such as methylglyoxal, propionaldehyde or benzaldehyde. Involved in the degradation of lactaldehyde produced during metabolism of L-fucose and L-rhamnose. It may be involved in several other metabolic pathways. This Escherichia coli (strain K12) protein is Lactaldehyde dehydrogenase (aldA).